A 240-amino-acid polypeptide reads, in one-letter code: MVSKTPSTSSDEANATADERCRKGKVPKRINKAVRERLKREHLNELFIELADTLELNQQNSGKASILCEATRFLKDVFGQIESLRKEHASLLSESSYVTTEKNELKEETSVLETEISKLQNEIEARANQSKPDLNTSPAPEYHHHHYQQQHPERVSQFPGLPIFQGPGFQQSATTLHPPATVLVLPIQPDPQTQDISEMTQAQQPLMFNSSNVSKPCPRYASAADSWSSRLLGERLKASE.

Polar residues predominate over residues methionine 1 to alanine 13. Residues methionine 1–valine 26 are disordered. The bHLH domain maps to proline 27–valine 77. The stretch at valine 98–lysine 131 forms a coiled coil. The segment covering asparagine 128–proline 138 has biased composition (polar residues). Residues asparagine 128–glutamate 153 form a disordered region.

In terms of assembly, homodimer. Forms heterodimer with PYEL proteins bHLH115, bHLH104 and ILR3. In terms of tissue distribution, expressed constitutively in roots, leaves, stems, and flowers.

The protein localises to the nucleus. The polypeptide is Transcription factor bHLH47 (BHLH47) (Arabidopsis thaliana (Mouse-ear cress)).